The sequence spans 250 residues: Pre-protein VI (250 aa).

The propeptide occupies 1 to 33 (MEDINFASLAPRHGSRPFMGNWQDIGTSNMSGG). The tract at residues 34–54 (AFSWGSLWSGIKNFGSTIKNY) is amphipathic alpha-helix essential for membrane lytic activity. The involved in endosomal membrane lysis stretch occupies residues 36-53 (SWGSLWSGIKNFGSTIKN). The tract at residues 48–74 (GSTIKNYGSKAWNSSTGQMLRDKLKEQ) is interaction with hexon protein. The short motif at 67–76 (LRDKLKEQNF) is the Nuclear export signal element. Residues 103–147 (INSKLDPRPPVEEPPPAVETVSPEGRGEKRPRPDREETLVTQIDE) form a disordered region. The residue at position 124 (Ser124) is a Phosphoserine; by host. Over residues 127–140 (GRGEKRPRPDREET) the composition is skewed to basic and acidic residues. The Nuclear localization signal signature appears at 131–135 (KRPRP). At Thr143 the chain carries Phosphothreonine; by host. Positions 148-151 (PPSY) match the PPXY motif motif. The span at 206–220 (PSRASLRRAASGPRS) shows a compositional bias: low complexity. The interval 206–226 (PSRASLRRAASGPRSMRPVAS) is disordered. A Nuclear export signal motif is present at residues 231–242 (STLNSIVGLGVQ). The interval 233 to 239 (LNSIVGL) is interaction with hexon protein. The segment at 240–250 (GVQSLKRRRCF) is binds to importin alpha/beta, involved in hexon nuclear import. The Nuclear localization signal motif lies at 245–248 (KRRR).

The protein belongs to the adenoviridae protein VI family. Interacts with hexon protein; this interaction allows nuclear import of hexon trimers and possibly pre-capsid assembly. Interacts (via C-terminal NLS) with importin alpha/beta. In terms of assembly, interacts (via PPxY motif) with host NEDD4 ubiquitine ligase; this interaction might play a role in virus intracellular transport during entry. Part of a complex composed of the core-capsid bridging protein, the endosome lysis protein VI and the hexon-linking protein VIII; these interactions bridge the virus core to the capsid. Interacts with peripentonal hexons; this interaction stabilizes the capsid by gluing two peripentonal hexons together and joining them with an adjacent group-of-nine hexon. As to quaternary structure, heterodimer with the viral protease; disulfide-linked. Interacts with the viral protease. Post-translationally, ubiquitinated by Nedd4 following partial capsid disassembly; which might play a role in intracellular virus movement during entry. In terms of processing, contains the major nuclear import and export signals. Proteolytically removed during virion maturation. The processing of the C-terminus turns the precursor into a mature viral structural protein and abrogates its ability to promote hexon import and act as a potential chaperone protein.

The protein resides in the host nucleus. It is found in the host cytoplasm. The protein localises to the virion. During virus assembly, promotes hexon trimers nuclear import through nuclear pore complexes via an importin alpha/beta-dependent mechanism. By analogy to herpesviruses capsid assembly, might act as a chaperone to promote the formation of the icosahedral capsid. Its function is as follows. Structural component of the virion that provides increased stability to the particle shell through its interaction with the core-capsid bridging protein and the hexon-linking protein VIII. Fibers shedding during virus entry into host cell allows the endosome lysis protein to be exposed as a membrane-lytic peptide. Exhibits pH-independent membrane fragmentation activity and probably mediates viral rapid escape from host endosome via organellar membrane lysis. It is not clear if it then remains partially associated with the capsid and involved in the intracellular microtubule-dependent transport of capsid to the nucleus, or if it is lost during endosomal penetration. Functionally, cofactor that activates the viral protease. Binds to viral protease in a 1:1 ratio. This Human adenovirus C serotype 2 (HAdV-2) protein is Pre-protein VI.